The sequence spans 363 residues: Probable transglycosylase BTH_I0986 (363 aa).

This sequence belongs to the glycosyltransferase group 1 family. Glycosyltransferase 4 subfamily.

Its function is as follows. Probably a transglycosylase. Probably involved in synthesis of the outer membrane receptor for a cellular contact-dependent growth inhibition (CDI) system. The sequence is that of Probable transglycosylase BTH_I0986 from Burkholderia thailandensis (strain ATCC 700388 / DSM 13276 / CCUG 48851 / CIP 106301 / E264).